Consider the following 304-residue polypeptide: D-alanine--D-alanine ligase (304 aa).

An ATP-grasp domain is found at 99–293 (KKILRYEGIE…YSKLLDMIIE (195 aa)). 126-181 (LDKLGFPLVVKPNSGGSSVGVKIVYDKDELISMLETVFEWDSEVVIEKYIKGEEIT) lines the ATP pocket. The Mg(2+) site is built by aspartate 248, glutamate 260, and asparagine 262.

It belongs to the D-alanine--D-alanine ligase family. Mg(2+) is required as a cofactor. The cofactor is Mn(2+).

It is found in the cytoplasm. It catalyses the reaction 2 D-alanine + ATP = D-alanyl-D-alanine + ADP + phosphate + H(+). The protein operates within cell wall biogenesis; peptidoglycan biosynthesis. Functionally, cell wall formation. This is D-alanine--D-alanine ligase from Bacillus anthracis (strain A0248).